A 461-amino-acid polypeptide reads, in one-letter code: Aldehyde dehydrogenase LUC3 (461 aa).

215 to 220 (GSTATG) is a binding site for NAD(+). Active-site residues include Glu237 and Cys271.

Belongs to the aldehyde dehydrogenase family.

It carries out the reaction an aldehyde + NAD(+) + H2O = a carboxylate + NADH + 2 H(+). It functions in the pathway mycotoxin biosynthesis. Aldehyde dehydrogenase; part of the gene cluster that mediates the biosynthesis of the mycotoxin lucilactaene and the lucilactaene-related compound NG-391 that act as cell cycle inhibitors with potent growth inhibitory activity against malarial parasites, moderate growth inhibitory activity against cancer cells, and no activity against bacteria and fungi. LUC3 is important for lucilactaene biosynthesis and performs the oxidation of the C-20 alcoholic analog prelucilactaene G into a carboxylic derivative that has still to be identified. The pathway begins with the hybrid PKS-NRPS synthetase LUC5 which is responsible for the condensation of one acetyl-coenzyme A (CoA) unit with six malonyl-CoA units and the amide linkage of the arising heptaketide and homoserine, subsequently releasing the first intermediate prelucilactaene B. Both the cytochrome P450 monooxygenase LUC2 and the hydrolase LUC6 function in parallel in modification of prelucilactaene B. LUC6 may catalyze the 2-pyrrolidone ring formation to form prelucilactaene C from prelucilactaene B, followed by C-15 hydroxylation by the same enzyme to give prelucilactaene D, which is then converted to prelucilactaene E by epoxidation, and finally to prelucilactaene F by cyclization. Prelucilactane D, prelucilactaene E, and prelucilactaene F can be converted to dihydrolucilactaene, NG391, and lucilactaene, respectively, via C-20 methyl group hydroxylation by the cytochrome P450 monooxygenase LUC2. However, LUC2, unlike FUS8 in fusarin C biosynthesis, is not enough for the full oxidation of the C-20 methyl group into carboxylic acid, which is a prerequisite for the final methylation step. The aldehyde dehydrogenase LUC3 is involved in the biosynthesis by further oxidation of the C-20 alcoholic analog prelucilactaene G into a carboxylic derivative. This unidentified carboxylic derivative may be converted to demethyllucilactaene. As the last step, the methyltransferase LUC1 methylates the hydroxyl group at C-21 of demethyllucilactaene to generate lucilactaene. The sequence is that of Aldehyde dehydrogenase LUC3 from Fusarium sp.